The sequence spans 804 residues: Probable protein phosphatase 2C 18 (804 aa).

The chain crosses the membrane as a helical span at residues 19–39 (DASGPVLFWCVLIIFAVPDAI). One can recognise a PPM-type phosphatase domain in the interval 129 to 434 (KYIVSSMQGL…ENTTVILVQF (306 aa)). Residues aspartate 165, glycine 166, glutamine 384, and glutamate 425 each coordinate Mn(2+). Disordered stretches follow at residues 460–509 (STSA…GGSA), 564–599 (DEVELDPNFRPKPQVRRAHDGPSPTPSEIEADLNAS), 623–653 (PLQGHDVSSTSTNPNTATDTGSGSRTGDDDV), and 675–804 (VDST…EGSP). Positions 468-499 (GSDSDTSATSDEGVDDTATAGTTTTGYEAGSS) are enriched in low complexity. Positions 628-637 (DVSSTSTNPN) are enriched in polar residues. A compositionally biased stretch (low complexity) spans 638–647 (TATDTGSGSR). Polar residues predominate over residues 713 to 734 (LVNNDTTVADNNASGVADSTTV). The segment covering 776–789 (DATATATASASAAV) has biased composition (low complexity). Residues 790–804 (ADDEGTAPDDSEGSP) are compositionally biased toward acidic residues.

This sequence belongs to the PP2C family. Requires Mg(2+) as cofactor. Mn(2+) serves as cofactor.

Its subcellular location is the membrane. It carries out the reaction O-phospho-L-seryl-[protein] + H2O = L-seryl-[protein] + phosphate. It catalyses the reaction O-phospho-L-threonyl-[protein] + H2O = L-threonyl-[protein] + phosphate. In Oryza sativa subsp. japonica (Rice), this protein is Probable protein phosphatase 2C 18.